The following is a 278-amino-acid chain: Formamidopyrimidine-DNA glycosylase (278 aa).

The active-site Schiff-base intermediate with DNA is proline 2. Glutamate 3 functions as the Proton donor in the catalytic mechanism. Residue lysine 58 is the Proton donor; for beta-elimination activity of the active site. DNA-binding residues include histidine 92 and arginine 111. The segment at 239 to 273 (HVYGKKGVPCERCGTPIEKIKVAQRGTHFCPKCQI) adopts an FPG-type zinc-finger fold. Catalysis depends on arginine 263, which acts as the Proton donor; for delta-elimination activity.

This sequence belongs to the FPG family. As to quaternary structure, monomer. Requires Zn(2+) as cofactor.

It catalyses the reaction Hydrolysis of DNA containing ring-opened 7-methylguanine residues, releasing 2,6-diamino-4-hydroxy-5-(N-methyl)formamidopyrimidine.. It carries out the reaction 2'-deoxyribonucleotide-(2'-deoxyribose 5'-phosphate)-2'-deoxyribonucleotide-DNA = a 3'-end 2'-deoxyribonucleotide-(2,3-dehydro-2,3-deoxyribose 5'-phosphate)-DNA + a 5'-end 5'-phospho-2'-deoxyribonucleoside-DNA + H(+). In terms of biological role, involved in base excision repair of DNA damaged by oxidation or by mutagenic agents. Acts as a DNA glycosylase that recognizes and removes damaged bases. Has a preference for oxidized purines, such as 7,8-dihydro-8-oxoguanine (8-oxoG). Has AP (apurinic/apyrimidinic) lyase activity and introduces nicks in the DNA strand. Cleaves the DNA backbone by beta-delta elimination to generate a single-strand break at the site of the removed base with both 3'- and 5'-phosphates. The protein is Formamidopyrimidine-DNA glycosylase of Latilactobacillus sakei subsp. sakei (strain 23K) (Lactobacillus sakei subsp. sakei).